The sequence spans 166 residues: MAQRLLLRRFLTSVISRKPPQGVWASLTSTSLQTPPYNAGGLTGTPSPARTFHTTRVCSTTFNVQDGPDFQDRVVNSETPVVVDFHAQWCGPCKILGPRLEKMVAKQHGKVVMAKVDIDDHTDLAIEYEVSAVPTVLAIKNGDVVDKFVGIKDEDQLEAFLKKLIG.

The N-terminal 59 residues, 1–59 (MAQRLLLRRFLTSVISRKPPQGVWASLTSTSLQTPPYNAGGLTGTPSPARTFHTTRVCS), are a transit peptide targeting the mitochondrion. The Thioredoxin domain maps to 61-166 (TFNVQDGPDF…LEAFLKKLIG (106 aa)). Catalysis depends on nucleophile residues C90 and C93. An intrachain disulfide couples C90 to C93. K152 bears the N6-acetyllysine; alternate mark. The residue at position 152 (K152) is an N6-succinyllysine; alternate.

Belongs to the thioredoxin family. In terms of assembly, monomer. As to expression, expressed in several tissues with the highest expression levels in heart, muscle, kidney and adrenal gland.

It is found in the mitochondrion. Its function is as follows. Important for the control of mitochondrial reactive oxygen species homeostasis, apoptosis regulation and cell viability. Is involved in various redox reactions including the reduction of protein disulfide bonds, through the reversible oxidation of its active center dithiol to a disulfide. This chain is Thioredoxin, mitochondrial (Txn2), found in Rattus norvegicus (Rat).